The chain runs to 961 residues: DNA replication licensing factor MCM2 (961 aa).

Over residues 1–17 the composition is skewed to polar residues; that stretch reads MDDSENNAPSTPGSPGF. Disordered stretches follow at residues 1–81 and 120–220; these read MDDS…FNDN and AEAE…EEDE. The span at 39–78 shows a compositional bias: acidic residues; sequence SDDDDDDVVGAEEAEVDPNVLPEDDGVVAAEEEEDGEDLF. Composition is skewed to basic and acidic residues over residues 120 to 146 and 166 to 176; these read AEAE…LHDQ and PPREPRTPRSD. Over residues 205–220 the composition is skewed to acidic residues; sequence QTDDDPYEDEFDEEDE. The C4-type zinc finger occupies 380–406; it reads CSKCGTVLGPFFQNSYTEVKVGSCPEC. The region spanning 524-730 is the MCM domain; sequence IGERIVKSIA…FTDEMLARFV (207 aa). 574 to 581 is a binding site for ATP; it reads GDPGTAKS. The Arginine finger signature appears at 706–709; it reads SRFD.

It belongs to the MCM family. In terms of assembly, component of the minichromosome maintenance (MCM) complex, a heterotetramer composed of MCM2, MCM3, MCM4, MCM5, MCM6 and MCM7.

It localises to the nucleus. It carries out the reaction ATP + H2O = ADP + phosphate + H(+). Functionally, probable component of the MCM2-7 complex (MCM complex) that may function as a DNA helicase and which is essential to undergo a single round of replication initiation and elongation per cell cycle in eukaryotic cells. The chain is DNA replication licensing factor MCM2 from Oryza sativa subsp. indica (Rice).